A 118-amino-acid polypeptide reads, in one-letter code: uncharacterized protein (118 aa).

The helical transmembrane segment at 7-27 threads the bilayer; that stretch reads LLTGLFVGGIIGGAAVLLTAP. Residues 31 to 118 are a coiled coil; that stretch reads KQLREKMKTN…IRQLEKTLQN (88 aa).

It is found in the cell membrane. This is an uncharacterized protein from Bacillus subtilis (strain 168).